Here is a 75-residue protein sequence, read N- to C-terminus: Holin (75 aa).

2 helical membrane passes run 16 to 36 (FAQA…GVDW) and 39 to 59 (ALSI…ASGI).

As to quaternary structure, homomultimer.

The protein resides in the host cell inner membrane. Accumulates harmlessly in the cytoplasmic membrane until it reaches a critical concentration that triggers the formation of micron-scale pores (holes) causing host cell membrane disruption and endolysin escape into the periplasmic space. Determines the precise timing of host cell lysis. Participates with the endolysin protein in the sequential events which lead to the programmed host cell lysis releasing the mature viral particles from the host cell. The sequence is that of Holin from Lactococcus lactis subsp. cremoris (Streptococcus cremoris).